Consider the following 362-residue polypeptide: Mitochondrial glycine transporter (362 aa).

Solcar repeat units follow at residues 22–108, 132–236, and 269–354; these read PDAT…MRTS, LTAM…FKND, and RSSI…LIKS. A run of 6 helical transmembrane segments spans residues 28 to 53, 83 to 109, 138 to 163, 211 to 234, 273 to 299, and 329 to 347; these read LLAG…TRLQ, GTLP…RTSW, LTTG…TRFE, GSVA…EAFK, INST…KTRL, and GLSL…SWCI.

It belongs to the mitochondrial carrier (TC 2.A.29) family. SLC25A38 subfamily.

It localises to the mitochondrion inner membrane. It catalyses the reaction glycine(in) = glycine(out). Its function is as follows. Mitochondrial glycine transporter that imports glycine into the mitochondrial matrix. Plays an important role in providing glycine for the first enzymatic step in heme biosynthesis, the condensation of glycine with succinyl-CoA to produce 5-aminolevulinate (ALA) in the mitochondrial matrix. The chain is Mitochondrial glycine transporter from Candida albicans (strain SC5314 / ATCC MYA-2876) (Yeast).